Here is a 372-residue protein sequence, read N- to C-terminus: Solute carrier family 35 member F6 (372 aa).

Residues 1–18 form the signal peptide; the sequence is MAWTKYQLFLAGLMLVTG. The next 2 membrane-spanning stretches (helical) occupy residues 48 to 68 and 89 to 109; these read FVQAVGMFLGEFSCLAAFYLL and LLFLPPALCDMTGTSIMYVAL. Residues 105-160 form the EamA domain; that stretch reads MYVALNMTSASSFQMLRGAVIIFTGLFSVAFLDRRLAPSQWLGILITIAGLVVVGL. The N-linked (GlcNAc...) asparagine glycan is linked to Asn-110. The next 7 helical transmembrane spans lie at 116–136, 145–165, 176–196, 211–231, 261–281, 293–312, and 320–336; these read SFQMLRGAVIIFTGLFSVAFL, WLGILITIAGLVVVGLADLLS, VITGDLLIIMAQIIIAIQMVL, AVGIEGFFGFVILSLLLVPMF, LIALALLGNISSIAFFNFSGI, MVLDTLRTIVIWAFTLALGW, and ILGFLILLMGTALYNGL. Phosphothreonine is present on Thr-366.

It belongs to the SLC35F solute transporter family. Interacts with SLC25A5.

It localises to the mitochondrion. The protein resides in the lysosome membrane. Functionally, involved in the maintenance of mitochondrial membrane potential in pancreatic ductal adenocarcinoma (PDAC) cells. Promotes pancreatic ductal adenocarcinoma (PDAC) cell growth. May play a role as a nucleotide-sugar transporter. The chain is Solute carrier family 35 member F6 (Slc35f6) from Mus musculus (Mouse).